Reading from the N-terminus, the 688-residue chain is Potassium-transporting ATPase ATP-binding subunit (688 aa).

A run of 4 helical transmembrane segments spans residues 37–57 (FLVYISSILTTVLYAVSLVGI), 65–85 (ILGITIILWITVLFANFAEAI), 219–239 (IALQILLISLTIIFLLVTVSL), and 262–282 (VALLVCLAPTTIGALLSSIGI). The active-site 4-aspartylphosphate intermediate is aspartate 313. ATP-binding positions include aspartate 350, glutamate 354, 383-390 (FTAKTRMS), and lysine 401. Residues aspartate 524 and aspartate 528 each contribute to the Mg(2+) site. The next 3 membrane-spanning stretches (helical) occupy residues 594–614 (FAIIPALFIGLYPGLSALNIM), 622–642 (AIFSAIIYNALIIVALIPLAL), and 668–688 (IIVPFIAIKVIDVLITAIGIV).

Belongs to the cation transport ATPase (P-type) (TC 3.A.3) family. Type IA subfamily. In terms of assembly, the system is composed of three essential subunits: KdpA, KdpB and KdpC.

It is found in the cell membrane. The enzyme catalyses K(+)(out) + ATP + H2O = K(+)(in) + ADP + phosphate + H(+). Its function is as follows. Part of the high-affinity ATP-driven potassium transport (or Kdp) system, which catalyzes the hydrolysis of ATP coupled with the electrogenic transport of potassium into the cytoplasm. This subunit is responsible for energy coupling to the transport system and for the release of the potassium ions to the cytoplasm. The protein is Potassium-transporting ATPase ATP-binding subunit of Clostridium botulinum (strain Eklund 17B / Type B).